Here is a 464-residue protein sequence, read N- to C-terminus: Protein ABHD18 (464 aa).

The N-terminal stretch at 1–24 (MGVSKLDILYRRLLLTKLFIRGWG) is a signal peptide. Asparagine 341 is a glycosylation site (N-linked (GlcNAc...) asparagine).

This sequence belongs to the AB hydrolase superfamily.

Its subcellular location is the secreted. The protein is Protein ABHD18 of Rattus norvegicus (Rat).